The chain runs to 256 residues: MAVGKNKRLSKGKKGVKKRTVDPFTRKDEYSVKAPSTFQIRDVGKTLVNRTSGLKNANDSLKGRIFEVSLADLQNDEDHAFRKVKLRVDEIQGKNCLTNFHGLDFTTDKLRSLVRKWQSLIEANVTVKTTDDYLLRLFAIAFTKRRPNQIKKTTYARSSQIRAIRKKMTEIMQREAASCSLAQLTHKLIPEVIGREIEKATQGIYPLQNVHIRKVKLLKAPKFDLGALLNLHGESTTDDKGQKVEREFKEQVLESV.

Residues 1 to 18 show a composition bias toward basic residues; sequence MAVGKNKRLSKGKKGVKK. Residues 1–20 are disordered; that stretch reads MAVGKNKRLSKGKKGVKKRT. Position 2 is an N-acetylalanine; partial (Ala-2).

Belongs to the eukaryotic ribosomal protein eS1 family. In terms of assembly, component of the small ribosomal subunit. Mature ribosomes consist of a small (40S) and a large (60S) subunit. The 40S subunit contains about 33 different proteins and 1 molecule of RNA (18S). The 60S subunit contains about 49 different proteins and 3 molecules of RNA (25S, 5.8S and 5S).

The protein localises to the cytoplasm. The chain is Small ribosomal subunit protein eS1 (rps1) from Aspergillus clavatus (strain ATCC 1007 / CBS 513.65 / DSM 816 / NCTC 3887 / NRRL 1 / QM 1276 / 107).